Reading from the N-terminus, the 318-residue chain is Putative S-adenosyl-L-methionine-dependent methyltransferase MMAR_1595 (318 aa).

S-adenosyl-L-methionine is bound by residues Glu132 and 161-162; that span reads DL.

The protein belongs to the UPF0677 family.

Functionally, exhibits S-adenosyl-L-methionine-dependent methyltransferase activity. The chain is Putative S-adenosyl-L-methionine-dependent methyltransferase MMAR_1595 from Mycobacterium marinum (strain ATCC BAA-535 / M).